The following is a 768-amino-acid chain: WD repeat-containing protein 20 homolog (768 aa).

The tract at residues 103–122 (ESPEAVAPTSSTYEHHKNEP) is disordered. WD repeat units follow at residues 224–264 (IEKT…ASSN), 302–342 (IGEG…LLAV), 345–384 (SYFG…VVCR), and 454–497 (CSLA…LNQG). Residues 531–608 (VSPGGAGVNA…VNSESSKKQN (78 aa)) form a disordered region. The segment covering 539–553 (NASSDSQSITNNHTT) has biased composition (polar residues). The span at 570-582 (FSKFTSGSSSATS) shows a compositional bias: low complexity. Residues 595–608 (NGASVNSESSKKQN) show a composition bias toward polar residues. Residues 646–683 (VSHDRLTVLEFREDCVVTACQEGYICTWGRPGRYQPKR) form a WD 5 repeat. The disordered stretch occupies residues 684–749 (DCINSPGTAS…PNITSPSYRV (66 aa)). Residues 688–712 (SPGTASPESGQKPSGSTSAMTSSYG) show a composition bias toward polar residues. A compositionally biased stretch (low complexity) spans 724-733 (SRSSSTYSNS). Positions 734-749 (EQQLRSPNITSPSYRV) are enriched in polar residues.

In terms of assembly, interacts with usp-46; the interaction increases the catalytic activity of usp-46 in the presence of wdr-48. In terms of tissue distribution, expressed in several neurons in the head and tail.

Together with wdr-48, binds to and stimulates the activity of the deubiquitinating enzyme usp-46, leading to deubiquitination and stabilization of the glr-1 glutamate receptor. The chain is WD repeat-containing protein 20 homolog from Caenorhabditis elegans.